Consider the following 565-residue polypeptide: Phosphomethylpyrimidine synthase (565 aa).

Residues Asn201, Met230, Tyr259, His295, Ser315–Gly317, Asp356–Arg359, and Glu395 each bind substrate. Position 399 (His399) interacts with Zn(2+). Tyr422 is a substrate binding site. Position 463 (His463) interacts with Zn(2+). [4Fe-4S] cluster is bound by residues Cys543, Cys546, and Cys551.

Belongs to the ThiC family. As to quaternary structure, homodimer. [4Fe-4S] cluster serves as cofactor.

The enzyme catalyses 5-amino-1-(5-phospho-beta-D-ribosyl)imidazole + S-adenosyl-L-methionine = 4-amino-2-methyl-5-(phosphooxymethyl)pyrimidine + CO + 5'-deoxyadenosine + formate + L-methionine + 3 H(+). It functions in the pathway cofactor biosynthesis; thiamine diphosphate biosynthesis. Functionally, catalyzes the synthesis of the hydroxymethylpyrimidine phosphate (HMP-P) moiety of thiamine from aminoimidazole ribotide (AIR) in a radical S-adenosyl-L-methionine (SAM)-dependent reaction. The chain is Phosphomethylpyrimidine synthase from Ehrlichia canis (strain Jake).